Consider the following 78-residue polypeptide: Cytochrome c-551 (78 aa).

Heme c is bound by residues cysteine 14, cysteine 17, histidine 18, and methionine 55.

Post-translationally, binds 1 heme c group covalently per subunit.

In Halorhodospira halophila (Ectothiorhodospira halophila), this protein is Cytochrome c-551.